Reading from the N-terminus, the 534-residue chain is Dual specificity calcium/calmodulin-dependent 3',5'-cyclic nucleotide phosphodiesterase 1B (534 aa).

The tract at residues 1-21 is disordered; the sequence is MELSPRSPPEMLESDCPSPLE. Residues serine 7 and serine 14 each carry the phosphoserine modification. 2 calmodulin-binding regions span residues 27 to 47 and 116 to 139; these read SKKM…QLEN and EKPK…MFRR. Positions 144–501 constitute a PDEase domain; it reads VGPTYSTAVL…QKWKERAASG (358 aa). Residue histidine 221 is the Proton donor of the active site. Zn(2+) contacts are provided by histidine 225, histidine 261, aspartate 262, and aspartate 368. Residue aspartate 262 participates in Mg(2+) binding. Disordered stretches follow at residues 442 to 473 and 494 to 534; these read VQPT…GDPN and WKER…GNLD. Residues 453–462 show a composition bias toward polar residues; it reads KNQPSFQWRQ. A phosphoserine mark is found at serine 464 and serine 512.

The protein belongs to the cyclic nucleotide phosphodiesterase family. PDE1 subfamily. As to quaternary structure, homodimer. Requires Zn(2+) as cofactor. Mg(2+) serves as cofactor. As to expression, expressed in central nervous system regions. Most abundant in basal ganglia. Also found in kidney papilla and adrenal medulla.

It localises to the cytoplasm. Its subcellular location is the cytosol. The catalysed reaction is a nucleoside 3',5'-cyclic phosphate + H2O = a nucleoside 5'-phosphate + H(+). The enzyme catalyses 3',5'-cyclic GMP + H2O = GMP + H(+). It carries out the reaction 3',5'-cyclic AMP + H2O = AMP + H(+). Its activity is regulated as follows. Type I PDE are activated by the binding of calmodulin in the presence of Ca(2+). Functionally, cyclic nucleotide phosphodiesterase with a dual specificity for the second messengers cAMP and cGMP, which are key regulators of many important physiological processes. Has a preference for cGMP as a substrate. The protein is Dual specificity calcium/calmodulin-dependent 3',5'-cyclic nucleotide phosphodiesterase 1B of Bos taurus (Bovine).